Reading from the N-terminus, the 22-residue chain is Brevinin-1OKd (22 aa).

Lysine 22 is modified (lysine amide).

In terms of tissue distribution, expressed by the skin glands.

It localises to the secreted. Functionally, antimicrobial peptide. The sequence is that of Brevinin-1OKd from Nidirana okinavana (Kampira Falls frog).